The primary structure comprises 214 residues: Calcineurin B homologous protein 3 (214 aa).

Glycine 2 carries N-myristoyl glycine lipidation. The 36-residue stretch at phenylalanine 110–glycine 145 folds into the EF-hand domain. The Ca(2+) site is built by aspartate 123, aspartate 125, aspartate 127, and glutamate 134.

It belongs to the calcineurin regulatory subunit family. CHP subfamily. As to quaternary structure, monomer. Homodimer. As to expression, expressed in the bipotential gonad by E4.5 and expressed in both the testis and ovary by E5.5, but with expression higher in the testis. Expressed in the testis cords but also at low levels in the interstitium. In the ovary, expression is principally in the ovarian cortex, but also in the medulla. Also expressed in the embryonic brain, with expression highest in the region between the nasal placode and olfactory bulb. Also expressed in the embryonic heart and tail.

Its subcellular location is the nucleus. It is found in the cytoplasm. The protein resides in the membrane. The protein localises to the cell membrane. It localises to the cell projection. Its subcellular location is the lamellipodium. It is found in the ruffle membrane. Functions as an integral cofactor in cell pH regulation by controlling plasma membrane-type Na(+)/H(+) exchange activity. Promotes the induction of hematopoietic stem cell differentiation toward megakaryocytic lineage. Essential for the coupling of ERK cascade activation with the expression of ETS family genes in megakaryocytic differentiation. Also involved in granulocytic differentiation in a ERK-dependent manner. Inhibits the phosphatase activity of calcineurin. This is Calcineurin B homologous protein 3 from Gallus gallus (Chicken).